The following is a 543-amino-acid chain: Chaperonin GroEL (543 aa).

ATP is bound by residues 31–34 (TMGP), 88–92 (DGTTT), G415, 479–481 (DAL), and D495.

Belongs to the chaperonin (HSP60) family. As to quaternary structure, forms a cylinder of 14 subunits composed of two heptameric rings stacked back-to-back. Interacts with the co-chaperonin GroES.

The protein resides in the cytoplasm. The enzyme catalyses ATP + H2O + a folded polypeptide = ADP + phosphate + an unfolded polypeptide.. Functionally, together with its co-chaperonin GroES, plays an essential role in assisting protein folding. The GroEL-GroES system forms a nano-cage that allows encapsulation of the non-native substrate proteins and provides a physical environment optimized to promote and accelerate protein folding. In Clostridium tetani (strain Massachusetts / E88), this protein is Chaperonin GroEL.